Here is a 402-residue protein sequence, read N- to C-terminus: Arginine biosynthesis bifunctional protein ArgJ (402 aa).

The substrate site is built by T152, K178, T189, E275, N397, and T402. The active-site Nucleophile is T189.

Belongs to the ArgJ family. In terms of assembly, heterotetramer of two alpha and two beta chains.

It localises to the cytoplasm. It carries out the reaction N(2)-acetyl-L-ornithine + L-glutamate = N-acetyl-L-glutamate + L-ornithine. The catalysed reaction is L-glutamate + acetyl-CoA = N-acetyl-L-glutamate + CoA + H(+). Its pathway is amino-acid biosynthesis; L-arginine biosynthesis; L-ornithine and N-acetyl-L-glutamate from L-glutamate and N(2)-acetyl-L-ornithine (cyclic): step 1/1. The protein operates within amino-acid biosynthesis; L-arginine biosynthesis; N(2)-acetyl-L-ornithine from L-glutamate: step 1/4. Its function is as follows. Catalyzes two activities which are involved in the cyclic version of arginine biosynthesis: the synthesis of N-acetylglutamate from glutamate and acetyl-CoA as the acetyl donor, and of ornithine by transacetylation between N(2)-acetylornithine and glutamate. This is Arginine biosynthesis bifunctional protein ArgJ from Symbiobacterium thermophilum (strain DSM 24528 / JCM 14929 / IAM 14863 / T).